We begin with the raw amino-acid sequence, 310 residues long: Porphobilinogen deaminase (310 aa).

S-(dipyrrolylmethanemethyl)cysteine is present on Cys-242.

Belongs to the HMBS family. In terms of assembly, monomer. Dipyrromethane serves as cofactor.

The catalysed reaction is 4 porphobilinogen + H2O = hydroxymethylbilane + 4 NH4(+). Its pathway is porphyrin-containing compound metabolism; protoporphyrin-IX biosynthesis; coproporphyrinogen-III from 5-aminolevulinate: step 2/4. Its function is as follows. Tetrapolymerization of the monopyrrole PBG into the hydroxymethylbilane pre-uroporphyrinogen in several discrete steps. This chain is Porphobilinogen deaminase, found in Shewanella sp. (strain ANA-3).